A 754-amino-acid chain; its full sequence is Gelsolin, cytoplasmic (754 aa).

The tract at residues 1–120 (MVPAFEGAGA…RYLKGGVASG (120 aa)) is actin-severing. The Gelsolin-like 1 repeat unit spans residues 22 to 71 (FEVVPYPKEKYGQFYQGDSYIVLYTRDVNGNLSWDLHFWLGSETSQDEAG). Positions 68–71 (DEAG) are actin-actin interfilament contact point. Residues 101 to 108 (LFLSRFKK) and 133 to 141 (RLFHVKGRR) each bind a 1,2-diacyl-sn-glycero-3-phospho-(1D-myo-inositol-4,5-bisphosphate). Residues 143–183 (IRIRQVEVGVGSMNKGDCFILDCGSQVYAYMGPSSRKMDRL) form a Gelsolin-like 2 repeat. The tract at residues 209–238 (TASGSEAGESSPGLGGGSPDDVADEDTGVD) is disordered. Over residues 210–220 (ASGSEAGESSP) the composition is skewed to low complexity. Gelsolin-like repeat units lie at residues 266–306 (NMIG…KEKV), 414–463 (LKLE…DEKA), 538–580 (FDTR…EEKA), and 643–684 (LRVN…QEKE). The interval 386–751 (LLQKNAGPAF…MKAQVPETNA (366 aa)) is actin-binding, Ca-sensitive. The Ca(2+) site is built by Gly-430, Asp-431, Glu-461, Asp-556, Glu-578, Asp-659, Asp-660, and Glu-682.

Belongs to the villin/gelsolin family. In terms of tissue distribution, tail muscle.

The protein localises to the cytoplasm. The protein resides in the cytoskeleton. Functionally, calcium-regulated, actin-modulating protein that binds to the plus (or barbed) ends of actin monomers or filaments, preventing monomer exchange (end-blocking or capping). It can promote the assembly of monomers into filaments (nucleation) as well as sever filaments already formed. The chain is Gelsolin, cytoplasmic from Homarus americanus (American lobster).